The following is a 132-amino-acid chain: Small ribosomal subunit protein uS8 (132 aa).

This sequence belongs to the universal ribosomal protein uS8 family. In terms of assembly, part of the 30S ribosomal subunit. Contacts proteins S5 and S12.

One of the primary rRNA binding proteins, it binds directly to 16S rRNA central domain where it helps coordinate assembly of the platform of the 30S subunit. This chain is Small ribosomal subunit protein uS8, found in Borrelia hermsii (strain HS1 / DAH).